The chain runs to 290 residues: ATP synthase subunit a (290 aa).

The next 7 membrane-spanning stretches (helical) occupy residues 54-74, 115-135, 136-156, 164-184, 201-221, 233-253, and 254-274; these read AVHL…ILLF, IAPL…LKWI, PVDY…KIVP, FGLS…VKGF, LVPF…LSLA, VVFI…NVPW, and AIFH…LTVV.

It belongs to the ATPase A chain family. In terms of assembly, F-type ATPases have 2 components, CF(1) - the catalytic core - and CF(0) - the membrane proton channel. CF(1) has five subunits: alpha(3), beta(3), gamma(1), delta(1), epsilon(1). CF(0) has three main subunits: a(1), b(2) and c(9-12). The alpha and beta chains form an alternating ring which encloses part of the gamma chain. CF(1) is attached to CF(0) by a central stalk formed by the gamma and epsilon chains, while a peripheral stalk is formed by the delta and b chains.

Its subcellular location is the cell inner membrane. In terms of biological role, key component of the proton channel; it plays a direct role in the translocation of protons across the membrane. The sequence is that of ATP synthase subunit a from Stutzerimonas stutzeri (strain A1501) (Pseudomonas stutzeri).